We begin with the raw amino-acid sequence, 218 residues long: Flagellin B1 (218 aa).

The propeptide occupies 1–12 (MNIKEFLSNKKG). Residues N38, N71, N77, N115, and N136 are each glycosylated (N-linked (GlcNAc...) asparagine).

This sequence belongs to the archaeal flagellin family. In terms of processing, N-linked glycans consist of the 779 Da trisaccharide beta-ManNAc(Thr)-(1-4)-beta-GlcNAc3NAcA-(1-3)-beta-GlcNAc.

It localises to the archaeal flagellum. Its function is as follows. Flagellin is the subunit protein which polymerizes to form the filaments of archaeal flagella. In Methanococcus voltae, this protein is Flagellin B1 (flaB1).